Reading from the N-terminus, the 92-residue chain is MASQQEKKQLDERAKKGETVVPGGTGGKSFEAQQHLAEGRSRGGQTRKEQLGTEGYQQMGRKGGLSTGDKPGGEHAEEEGVEIDESKFRTKT.

Composition is skewed to basic and acidic residues over residues 1-18 (MASQ…KKGE) and 37-51 (AEGR…KEQL). The disordered stretch occupies residues 1-92 (MASQQEKKQL…IDESKFRTKT (92 aa)).

Belongs to the small hydrophilic plant seed protein family. Present only in nearly dry and dry seeds.

Its function is as follows. It is thought to provide protection for the cytoplasm during the desiccation stage of embryo development. This chain is Em-like protein GEA6 (EM6), found in Arabidopsis thaliana (Mouse-ear cress).